We begin with the raw amino-acid sequence, 247 residues long: Segregation and condensation protein A (247 aa).

It belongs to the ScpA family. As to quaternary structure, component of a cohesin-like complex composed of ScpA, ScpB and the Smc homodimer, in which ScpA and ScpB bind to the head domain of Smc. The presence of the three proteins is required for the association of the complex with DNA.

Its subcellular location is the cytoplasm. Functionally, participates in chromosomal partition during cell division. May act via the formation of a condensin-like complex containing Smc and ScpB that pull DNA away from mid-cell into both cell halves. This chain is Segregation and condensation protein A, found in Lactobacillus gasseri (strain ATCC 33323 / DSM 20243 / BCRC 14619 / CIP 102991 / JCM 1131 / KCTC 3163 / NCIMB 11718 / NCTC 13722 / AM63).